Consider the following 107-residue polypeptide: uncharacterized protein (107 aa).

This is an uncharacterized protein from Autographa californica nuclear polyhedrosis virus (AcMNPV).